Consider the following 120-residue polypeptide: Crustacean hyperglycemic hormones 4 (120 aa).

An N-terminal signal peptide occupies residues 1–26 (MVALNTLSAVSAALLVLAASPSPASA). 3 disulfides stabilise this stretch: Cys53/Cys89, Cys69/Cys85, and Cys72/Cys98. Val118 carries the valine amide modification.

The protein belongs to the arthropod CHH/MIH/GIH/VIH hormone family.

The protein localises to the secreted. Hormone found in the sinus gland of isopods and decapods which controls the blood sugar level. Has a secretagogue action over the amylase released from the midgut gland. May act as a stress hormone and may be involved in the control of molting and reproduction. The sequence is that of Crustacean hyperglycemic hormones 4 (CHH4) from Penaeus monodon (Giant tiger prawn).